A 523-amino-acid chain; its full sequence is 2-isopropylmalate synthase (523 aa).

Positions 5 to 267 constitute a Pyruvate carboxyltransferase domain; the sequence is VIIFDTTLRD…HTAINHQEIW (263 aa). Mn(2+) contacts are provided by Asp14, His202, His204, and Asn238. Residues 392–523 form a regulatory domain region; that stretch reads RLDYFSVQSG…QHNENNKETV (132 aa).

Belongs to the alpha-IPM synthase/homocitrate synthase family. LeuA type 1 subfamily. In terms of assembly, homodimer. The cofactor is Mn(2+).

It is found in the cytoplasm. It carries out the reaction 3-methyl-2-oxobutanoate + acetyl-CoA + H2O = (2S)-2-isopropylmalate + CoA + H(+). It participates in amino-acid biosynthesis; L-leucine biosynthesis; L-leucine from 3-methyl-2-oxobutanoate: step 1/4. Functionally, catalyzes the condensation of the acetyl group of acetyl-CoA with 3-methyl-2-oxobutanoate (2-ketoisovalerate) to form 3-carboxy-3-hydroxy-4-methylpentanoate (2-isopropylmalate). This Escherichia coli O157:H7 protein is 2-isopropylmalate synthase.